A 178-amino-acid chain; its full sequence is Fibroin heavy chain (178 aa).

A signal peptide spans 1–21 (MRVKTFVILCCALQYVAYTNA). Residues 149–178 (AVGAGAGAGAAAGSGAGAGAGYGAASGAGA) form a highly repetitive region.

In terms of assembly, silk fibroin elementary unit consists in a disulfide-linked heavy and light chain and a p25 glycoprotein in molar ratios of 6:6:1. This results in a complex of approximately 2.3 MDa. Post-translationally, the interchain disulfide bridge is essential for the intracellular transport and secretion of fibroin. In terms of tissue distribution, produced exclusively in the posterior (PSG) section of silk glands, which are essentially modified salivary glands.

In terms of biological role, core component of the silk filament; a strong, insoluble and chemically inert fiber. This Bombyx mandarina (Wild silk moth) protein is Fibroin heavy chain (FIBH).